We begin with the raw amino-acid sequence, 178 residues long: 2-C-methyl-D-erythritol 2,4-cyclodiphosphate synthase (178 aa).

Asp24, His26, and His61 together coordinate a divalent metal cation. 24–26 contacts 4-CDP-2-C-methyl-D-erythritol 2-phosphate; the sequence is DSH. 150–153 contacts 4-CDP-2-C-methyl-D-erythritol 2-phosphate; that stretch reads TSGE.

It belongs to the IspF family. Homotrimer. The cofactor is a divalent metal cation.

It catalyses the reaction 4-CDP-2-C-methyl-D-erythritol 2-phosphate = 2-C-methyl-D-erythritol 2,4-cyclic diphosphate + CMP. It participates in isoprenoid biosynthesis; isopentenyl diphosphate biosynthesis via DXP pathway; isopentenyl diphosphate from 1-deoxy-D-xylulose 5-phosphate: step 4/6. In terms of biological role, involved in the biosynthesis of isopentenyl diphosphate (IPP) and dimethylallyl diphosphate (DMAPP), two major building blocks of isoprenoid compounds. Catalyzes the conversion of 4-diphosphocytidyl-2-C-methyl-D-erythritol 2-phosphate (CDP-ME2P) to 2-C-methyl-D-erythritol 2,4-cyclodiphosphate (ME-CPP) with a corresponding release of cytidine 5-monophosphate (CMP). This is 2-C-methyl-D-erythritol 2,4-cyclodiphosphate synthase from Chlamydia trachomatis serovar A (strain ATCC VR-571B / DSM 19440 / HAR-13).